Consider the following 340-residue polypeptide: MISVAVNGYGTIGKRVADAILKQPDMRLVGVAKTSPNYEAFIAHRKGIKIYVPQQSIKKFEESGIPVAGTIEDLVKASDIVVDTTPNGVGAQYKPIYQQFQRNAIFQGGEKAEVADISFSALCNYDEALGKKYIRVVSCNTTALLRTICTINKVTKVEKVRATIVRRAADQKEVKKGPINSLVPDPATVPSHHAKDVNSVIKNLDIVTMAVIAPTTLMHMHFINITLKDKVEKKDVLSVLENTPRIVLISSKYDAEATAELVEVARDLKRERNDIPEVMVFDDSVYVKDNEVMLMYAVHQESIVVPENVDAIRASTRLMSAEDSIRITNESLGILKGYLI.

NAD(+)-binding positions include Thr-11–Ile-12 and Gly-109. Position 138–140 (Ser-138–Asn-140) interacts with D-glyceraldehyde 3-phosphate. Catalysis depends on Cys-139, which acts as the Nucleophile. An NAD(+)-binding site is contributed by Arg-167. Position 193 to 194 (His-193 to Ala-194) interacts with D-glyceraldehyde 3-phosphate. Gln-300 is a binding site for NAD(+).

It belongs to the glyceraldehyde-3-phosphate dehydrogenase family. As to quaternary structure, homotetramer.

The protein localises to the cytoplasm. The catalysed reaction is D-glyceraldehyde 3-phosphate + phosphate + NADP(+) = (2R)-3-phospho-glyceroyl phosphate + NADPH + H(+). The enzyme catalyses D-glyceraldehyde 3-phosphate + phosphate + NAD(+) = (2R)-3-phospho-glyceroyl phosphate + NADH + H(+). It participates in carbohydrate degradation; glycolysis; pyruvate from D-glyceraldehyde 3-phosphate: step 1/5. The sequence is that of Glyceraldehyde-3-phosphate dehydrogenase from Saccharolobus islandicus (strain Y.N.15.51 / Yellowstone #2) (Sulfolobus islandicus).